Consider the following 405-residue polypeptide: Teichoic acid D-alanyltransferase (405 aa).

The Extracellular segment spans residues 1–9 (MLNLQPYEN). Residues 10 to 29 (PQYFVYLIIALLPVIIGMFK) form a helical membrane-spanning segment. Over 30–33 (GFRM) the chain is Cytoplasmic. The chain crosses the membrane as a helical span at residues 34-49 (HWYESIFSLVFLVLIF). The Extracellular segment spans residues 50-53 (DADK). A helical membrane pass occupies residues 54-80 (WPQGKALLGYVVFNLLLVYAYFKYRTR). Residues 81–86 (EGSKNS) lie on the Cytoplasmic side of the membrane. Residues 87–111 (TAVFYLSVALGIAHVAVVKFTPLFQ) form a helical membrane-spanning segment. Residues 112 to 121 (HHGSILGFLG) are Extracellular-facing. The chain crosses the membrane as a helical span at residues 122–138 (ISYLTFRVVGTIMEIRD). At 139 to 145 (GSIKDLN) the chain is on the cytoplasmic side. Residues 146–175 (MWKFIQFLLFFPTISSGPIDRYRRFVKDYD) lie within the membrane without spanning it. Residues 176–179 (RVPD) lie on the Cytoplasmic side of the membrane. Residues 180–223 (PEHYAQLVTKAIHYLMLGFLYKFILGYIFGTLWLPSVEHMAMAS) form a helical membrane-spanning segment. At 224-232 (RGGAFLGLS) the chain is on the extracellular side. Residues 233–264 (WPVVGVMYAYSGYLFFDFAGYSLFAVAISYLM) traverse the membrane as a helical segment. Topologically, residues 265–274 (GIETPMNFNK) are cytoplasmic. The stretch at 275–310 (PWSHITSRLLNRWQLSLSFWFRDYIYMRFVFFMMKH) is an intramembrane region. Topologically, residues 311–315 (KWIKS) are cytoplasmic. The helical transmembrane segment at 316–335 (RVWTAFVGYLVLFLIMGIWH) threads the bilayer. The active site involves His-335. Residues 336–338 (GET) are Extracellular-facing. Residues 339–372 (WYYIVYGLFHAMLINLTDAWLRFKKKHKDFFPHN) traverse the membrane as a helical segment. Over 373–378 (RATHYP) the chain is Cytoplasmic. The chain crosses the membrane as a helical span at residues 379–399 (SPFSMTANAVCFSFLIFSGFL). The Extracellular portion of the chain corresponds to 400 to 405 (DKLWFH).

The protein belongs to the membrane-bound acyltransferase family.

It is found in the cell membrane. Its pathway is cell wall biogenesis; lipoteichoic acid biosynthesis. O-acyltransferase that catalyzes D-alanylation of both teichoic acid and lipoteichoic acid (LTA). D-alanylation of LTA plays an important role in modulating the properties of the cell wall in Gram-positive bacteria, influencing the net charge of the cell wall. Catalyzes D-alanylation from DltC carrier protein. This is Teichoic acid D-alanyltransferase from Lacticaseibacillus rhamnosus (Lactobacillus rhamnosus).